The primary structure comprises 293 residues: EID1-like F-box protein 1 (293 aa).

An F-box domain is found at 16–68 (QCTKGHLNEDVLLLVFQHLNWNPKLVATLSCVCRWFDDFAKRVLWKEFCKTRA). Residues 245–293 (AIPSEDNNHTEKKQDNGFPRENVLKRRNSLLGGSENGPPPQKRLTNPNQ) are disordered. The span at 250-259 (DNNHTEKKQD) shows a compositional bias: basic and acidic residues.

The protein is EID1-like F-box protein 1 (EDL1) of Arabidopsis thaliana (Mouse-ear cress).